Consider the following 550-residue polypeptide: Dihydroxy-acid dehydratase (550 aa).

Mg(2+) is bound at residue D78. C119 contributes to the [2Fe-2S] cluster binding site. Positions 120 and 121 each coordinate Mg(2+). At K121 the chain carries N6-carboxylysine. [2Fe-2S] cluster is bound at residue C191. E440 serves as a coordination point for Mg(2+). The active-site Proton acceptor is S466.

The protein belongs to the IlvD/Edd family. Homodimer. It depends on [2Fe-2S] cluster as a cofactor. Mg(2+) is required as a cofactor.

It carries out the reaction (2R)-2,3-dihydroxy-3-methylbutanoate = 3-methyl-2-oxobutanoate + H2O. It catalyses the reaction (2R,3R)-2,3-dihydroxy-3-methylpentanoate = (S)-3-methyl-2-oxopentanoate + H2O. The protein operates within amino-acid biosynthesis; L-isoleucine biosynthesis; L-isoleucine from 2-oxobutanoate: step 3/4. It functions in the pathway amino-acid biosynthesis; L-valine biosynthesis; L-valine from pyruvate: step 3/4. Its function is as follows. Functions in the biosynthesis of branched-chain amino acids. Catalyzes the dehydration of (2R,3R)-2,3-dihydroxy-3-methylpentanoate (2,3-dihydroxy-3-methylvalerate) into 2-oxo-3-methylpentanoate (2-oxo-3-methylvalerate) and of (2R)-2,3-dihydroxy-3-methylbutanoate (2,3-dihydroxyisovalerate) into 2-oxo-3-methylbutanoate (2-oxoisovalerate), the penultimate precursor to L-isoleucine and L-valine, respectively. The chain is Dihydroxy-acid dehydratase from Methanococcus vannielii (strain ATCC 35089 / DSM 1224 / JCM 13029 / OCM 148 / SB).